We begin with the raw amino-acid sequence, 69 residues long: Conotoxin Fr3.1 (69 aa).

Positions 1–20 (MLKTGVLLLIFLVLFPLATL) are cleaved as a signal peptide. Positions 21–51 (QDADQPVERNVENKQDLNLDKRRGMKLLAQR) are excised as a propeptide. A Pyrrolidone carboxylic acid modification is found at Gln-52. A 4-carboxyglutamate modification is found at Glu-54. 4-hydroxyproline is present on Pro-58.

This sequence belongs to the conotoxin M superfamily. As to expression, expressed by the venom duct.

The protein resides in the secreted. In terms of biological role, probable toxin. The protein is Conotoxin Fr3.1 of Conus frigidus (Frigid cone).